Here is a 266-residue protein sequence, read N- to C-terminus: Putative transmembrane ascorbate-dependent reductase CYB561 homolog (266 aa).

Residues 1 to 22 (MSLLFDPGFVILREDQSVKLFN) are Cytoplasmic-facing. Residues 23–43 (IILVMSQVFGGLAVLLVTIWM) form a helical membrane-spanning segment. The 214-residue stretch at 27–240 (MSQVFGGLAV…YTVCVLLLVL (214 aa)) folds into the Cytochrome b561 domain. Over 44–61 (SKFESGFAWNEDPDKEFN) the chain is Vesicular. Residues 62–82 (YHPTFMIMGMVFLFGEALLVY) form a helical membrane-spanning segment. The heme b site is built by His63, Arg83, and Lys90. At 83 to 95 (RVFRNERKKFSKT) the chain is on the cytoplasmic side. Residues Lys90 and Lys94 each contribute to the L-ascorbate site. The chain crosses the membrane as a helical span at residues 96-116 (LHVILHSCVLVFMLMALKAVF). Residues His97, 134 to 137 (NLVS), and His139 each bind heme b. Topologically, residues 117–141 (DYHNLHKDPSGNPAPIVNLVSLHSW) are vesicular. A helical membrane pass occupies residues 142–162 (IGLSVVILYFAQYIVGFITYF). At 163-176 (FPGMPIPIRQLVMP) the chain is on the cytoplasmic side. L-ascorbate is bound at residue Arg171. The chain crosses the membrane as a helical span at residues 177 to 197 (FHQMFGVLIFIFVSITVAMGI). 2 residues coordinate heme b: His178 and Glu199. The Vesicular portion of the chain corresponds to 198-219 (SERAAWKHTCWTKEGQMCAQQA). A helical transmembrane segment spans residues 220–240 (TSSFVGVFTFLYTVCVLLLVL). The Cytoplasmic portion of the chain corresponds to 241-266 (NPRWKRQSLPEEEGLHHLTSSHSMSD). Lys245 contributes to the heme b binding site.

The cofactor is heme b.

It localises to the membrane. It carries out the reaction monodehydro-L-ascorbate radical(out) + L-ascorbate(in) = monodehydro-L-ascorbate radical(in) + L-ascorbate(out). Its function is as follows. Putative transmembrane reductase that uses ascorbate as an electron donor in the cytoplasm and transfers electrons across membranes to reduce monodehydro-L-ascorbate radical in the lumen of secretory vesicles. This chain is Putative transmembrane ascorbate-dependent reductase CYB561 homolog, found in Caenorhabditis elegans.